The following is a 671-amino-acid chain: MVPRNFSESQLRPEPERAPSNSTKISYRSHSSSFEADDERSSSADHDSMGPDIGSAHRDVPAQYAGEDTRLTSRKELSGWYAYGFAAEVFVICGIGSFIPITLEQLARENGVLLSDPTQPCGSSSTHLPPGLHPGSAKDSQCVIYLGGLQINTASFAMYSFSLSVLFQAILVVSISCAADHGNYRKRLLLFFAFAGSITTMLFLTVVPKVYLLGALWAIISNTCFGASFVLLNSFLPLLVRHHPKAQYGTPDFSPEFRPSSVDESPPEHSLNEPEVAVYDERSALLAHNRISSQASDVAEPFPLSKDSTSIELQLSTQISSTGIGIGYSAGLFLQCVSIVIIWLLNGTTFSLRLVLFFIGLWWFLFTIPAALWLRPRPGPPLPHTGGENSKGSRSWLAYTIYAWSSLFRTVKLARRLKDITFFLAAWFLLSDAIATVSGTAVLYAKTQLRMAPEALGLINVIATTAGVLGAFSWAAISRTLNLKPHQTILACICIFEMIPLYGLLGFLPIVKRWNVVGLQQPWEMYPLGFVYGFVLGGLSSYCRSLFGELIPPGSEAAFYALYAITDKGSSVFGPAIVGAIVDRTGEIRPAFWFLAVLVGLPAPLIYFVNVERGKKEGAKLAEIIEGFKIKDAESAGEGSRGSSIDHESGQNEGLIYPRVGENAGRGRNDI.

Composition is skewed to polar residues over residues 1–10 (MVPRNFSESQ) and 19–34 (PSNSTKISYRSHSSSF). A disordered region spans residues 1–67 (MVPRNFSESQ…RDVPAQYAGE (67 aa)). N-linked (GlcNAc...) asparagine glycans are attached at residues N5 and N21. Residues 39–60 (ERSSSADHDSMGPDIGSAHRDV) are compositionally biased toward basic and acidic residues. The next 4 helical transmembrane spans lie at 83-103 (YGFAAEVFVICGIGSFIPITL), 155-175 (SFAMYSFSLSVLFQAILVVSI), 188-208 (LLLFFAFAGSITTMLFLTVVP), and 212-232 (LLGALWAIISNTCFGASFVLL). A disordered region spans residues 251–271 (PDFSPEFRPSSVDESPPEHSL). A helical transmembrane segment spans residues 324–344 (IGIGYSAGLFLQCVSIVIIWL). N346 carries N-linked (GlcNAc...) asparagine glycosylation. Helical transmembrane passes span 354–374 (LVLFFIGLWWFLFTIPAALWL), 422–442 (FFLAAWFLLSDAIATVSGTAV), 457–477 (GLINVIATTAGVLGAFSWAAI), 491–511 (ACICIFEMIPLYGLLGFLPIV), 523–543 (WEMYPLGFVYGFVLGGLSSYC), 560–582 (YALYAITDKGSSVFGPAIVGAIV), and 591–611 (AFWFLAVLVGLPAPLIYFVNV). Positions 634–671 (ESAGEGSRGSSIDHESGQNEGLIYPRVGENAGRGRNDI) are disordered.

The protein belongs to the ATG22 family.

It is found in the vacuole membrane. Vacuolar effluxer which mediate the efflux of amino acids resulting from autophagic degradation. The release of autophagic amino acids allows the maintenance of protein synthesis and viability during nitrogen starvation. In Sclerotinia sclerotiorum (strain ATCC 18683 / 1980 / Ss-1) (White mold), this protein is Autophagy-related protein 22-2 (atg22-2).